Consider the following 387-residue polypeptide: Protochlorophyllide reductase A, chloroplastic (387 aa).

Residues 1–35 (MALQVQAALLPSALSVPKKGNLSAVVKEPGFLSVS) constitute a chloroplast transit peptide.

It belongs to the short-chain dehydrogenases/reductases (SDR) family. POR subfamily.

It is found in the plastid. Its subcellular location is the chloroplast. The enzyme catalyses chlorophyllide a + NADP(+) = protochlorophyllide a + NADPH + H(+). Its pathway is porphyrin-containing compound metabolism; chlorophyll biosynthesis. In terms of biological role, phototransformation of protochlorophyllide (Pchlide) to chlorophyllide (Chlide). This Oryza sativa subsp. japonica (Rice) protein is Protochlorophyllide reductase A, chloroplastic (PORA).